Consider the following 292-residue polypeptide: MDKVKIALQYMLPKHLLSRLVGKLAAAEAGALTTAAIKWFIKQYKIDMSEAAQSEPEAYKSFNAFFTRALKPGIRPLDMDADIMVHPVDGAVSQLGPIKNGRIFQAKGHHYSSLTLLGDQAEDAKRFEGGDFATIYLAPKDYHRIHMPIKGTLSKMTYVPGELFSVNPLTARNVPGLFARNERVVAIFETELGPLAMVLVGATIVASIETVWAGTVTPPTGKQVFTWEYPTQGPDAITLDKGEEMGRFKLGSTVVMLFAKDAIATFAEGVEAEAVTRMGQAFANLKDVKHAD.

Active-site charge relay system; for autoendoproteolytic cleavage activity residues include Asp89, His146, and Ser252. Catalysis depends on Ser252, which acts as the Schiff-base intermediate with substrate; via pyruvic acid; for decarboxylase activity. Residue Ser252 is modified to Pyruvic acid (Ser); by autocatalysis.

Belongs to the phosphatidylserine decarboxylase family. PSD-B subfamily. Prokaryotic type I sub-subfamily. As to quaternary structure, heterodimer of a large membrane-associated beta subunit and a small pyruvoyl-containing alpha subunit. It depends on pyruvate as a cofactor. Is synthesized initially as an inactive proenzyme. Formation of the active enzyme involves a self-maturation process in which the active site pyruvoyl group is generated from an internal serine residue via an autocatalytic post-translational modification. Two non-identical subunits are generated from the proenzyme in this reaction, and the pyruvate is formed at the N-terminus of the alpha chain, which is derived from the carboxyl end of the proenzyme. The autoendoproteolytic cleavage occurs by a canonical serine protease mechanism, in which the side chain hydroxyl group of the serine supplies its oxygen atom to form the C-terminus of the beta chain, while the remainder of the serine residue undergoes an oxidative deamination to produce ammonia and the pyruvoyl prosthetic group on the alpha chain. During this reaction, the Ser that is part of the protease active site of the proenzyme becomes the pyruvoyl prosthetic group, which constitutes an essential element of the active site of the mature decarboxylase.

The protein resides in the cell membrane. The enzyme catalyses a 1,2-diacyl-sn-glycero-3-phospho-L-serine + H(+) = a 1,2-diacyl-sn-glycero-3-phosphoethanolamine + CO2. It participates in phospholipid metabolism; phosphatidylethanolamine biosynthesis; phosphatidylethanolamine from CDP-diacylglycerol: step 2/2. Catalyzes the formation of phosphatidylethanolamine (PtdEtn) from phosphatidylserine (PtdSer). The protein is Phosphatidylserine decarboxylase proenzyme of Shewanella baltica (strain OS185).